Reading from the N-terminus, the 455-residue chain is N-acetyl-S-(2-succino)cysteine lyase (455 aa).

106 to 107 contacts fumarate; it reads TT. His-154 (proton donor/acceptor) is an active-site residue. Arg-233 is a fumarate binding site. Ser-277 (proton donor/acceptor) is an active-site residue. Residues Ser-278 and 283–285 each bind fumarate; that span reads KRN.

This sequence belongs to the lyase 1 family.

The enzyme catalyses N-acetyl-S-(2-succino)-L-cysteine = N-acetyl-L-cysteine + fumarate. The protein operates within amino-acid biosynthesis; L-cysteine biosynthesis. In terms of biological role, catalyzes the cleavage of N-acetyl-S-(2-succino)cysteine into fumarate and N-acetylcysteine. Is involved in a S-(2-succino)cysteine (2SC) degradation pathway that allows the bacterium to recover cysteine from 2SC and to detoxify 2SC that may be a toxic metabolite. Can also perform the reverse reaction in vitro, and has minor activity against 2SC and other small molecule thiols. The polypeptide is N-acetyl-S-(2-succino)cysteine lyase (Enterococcus italicus (strain DSM 15952 / CCUG 50447 / LMG 22039 / TP 1.5)).